The primary structure comprises 217 residues: Probable GTP-binding protein EngB (217 aa).

One can recognise an EngB-type G domain in the interval 29–213 (GPLEVAFAGR…RQAIAETVGI (185 aa)). GTP is bound by residues 37-44 (GRSNVGKS), 64-68 (GRTQE), 91-94 (DMPG), 158-161 (TKTD), and 192-194 (TSS). Ser-44 and Thr-66 together coordinate Mg(2+).

The protein belongs to the TRAFAC class TrmE-Era-EngA-EngB-Septin-like GTPase superfamily. EngB GTPase family. The cofactor is Mg(2+).

Functionally, necessary for normal cell division and for the maintenance of normal septation. The chain is Probable GTP-binding protein EngB from Rhizobium johnstonii (strain DSM 114642 / LMG 32736 / 3841) (Rhizobium leguminosarum bv. viciae).